Here is a 215-residue protein sequence, read N- to C-terminus: Translation initiation factor IF-3 (215 aa).

The tract at residues 159–215 is disordered; the sequence is SAEVQQPPKREGRNMIMFLGPRKTPLQKDKPEQATKAERTLPIAKPPGKTAAPAAAN. Residues 184 to 197 are compositionally biased toward basic and acidic residues; it reads LQKDKPEQATKAER. Residues 200 to 215 show a composition bias toward low complexity; that stretch reads PIAKPPGKTAAPAAAN.

The protein belongs to the IF-3 family. Monomer.

The protein resides in the cytoplasm. Its function is as follows. IF-3 binds to the 30S ribosomal subunit and shifts the equilibrium between 70S ribosomes and their 50S and 30S subunits in favor of the free subunits, thus enhancing the availability of 30S subunits on which protein synthesis initiation begins. The protein is Translation initiation factor IF-3 of Synechococcus sp. (strain RCC307).